Consider the following 118-residue polypeptide: Large ribosomal subunit protein bL20 (118 aa).

Belongs to the bacterial ribosomal protein bL20 family.

Its function is as follows. Binds directly to 23S ribosomal RNA and is necessary for the in vitro assembly process of the 50S ribosomal subunit. It is not involved in the protein synthesizing functions of that subunit. The polypeptide is Large ribosomal subunit protein bL20 (Leptothrix cholodnii (strain ATCC 51168 / LMG 8142 / SP-6) (Leptothrix discophora (strain SP-6))).